A 316-amino-acid chain; its full sequence is L-lactate dehydrogenase (316 aa).

34–39 (DVVEGV) is an NAD(+) binding site. Residues Arg89, Asn121, and Arg152 each contribute to the substrate site. Asn121 is an NAD(+) binding site. His172 acts as the Proton acceptor in catalysis.

The protein belongs to the LDH/MDH superfamily. LDH family. Homotetramer.

The catalysed reaction is (S)-lactate + NAD(+) = pyruvate + NADH + H(+). It functions in the pathway fermentation; pyruvate fermentation to lactate; (S)-lactate from pyruvate: step 1/1. The sequence is that of L-lactate dehydrogenase from Botryococcus braunii (Green alga).